The primary structure comprises 217 residues: Growth hormone variant (217 aa).

A signal peptide spans 1-26; sequence MAAGSWTCLILAIALLCLPWLQEGSA. 2 cysteine pairs are disulfide-bonded: C79–C191 and C208–C215. 2 positions are modified to phosphoserine: S132 and S176.

Belongs to the somatotropin/prolactin family. In terms of tissue distribution, expressed in the placenta.

It is found in the secreted. Its function is as follows. Plays an important role in growth control. Its major role in stimulating body growth is to stimulate the liver and other tissues to secrete IGF1. It stimulates both the differentiation and proliferation of myoblasts. It also stimulates amino acid uptake and protein synthesis in muscle and other tissues. The polypeptide is Growth hormone variant (GH2) (Macaca mulatta (Rhesus macaque)).